A 164-amino-acid polypeptide reads, in one-letter code: tRNA (cytidine(34)-2'-O)-methyltransferase (164 aa).

Positions 80, 102, 124, and 132 each coordinate S-adenosyl-L-methionine.

This sequence belongs to the class IV-like SAM-binding methyltransferase superfamily. RNA methyltransferase TrmH family. TrmL subfamily. As to quaternary structure, homodimer.

It is found in the cytoplasm. The enzyme catalyses cytidine(34) in tRNA + S-adenosyl-L-methionine = 2'-O-methylcytidine(34) in tRNA + S-adenosyl-L-homocysteine + H(+). It catalyses the reaction 5-carboxymethylaminomethyluridine(34) in tRNA(Leu) + S-adenosyl-L-methionine = 5-carboxymethylaminomethyl-2'-O-methyluridine(34) in tRNA(Leu) + S-adenosyl-L-homocysteine + H(+). In terms of biological role, methylates the ribose at the nucleotide 34 wobble position in the two leucyl isoacceptors tRNA(Leu)(CmAA) and tRNA(Leu)(cmnm5UmAA). Catalyzes the methyl transfer from S-adenosyl-L-methionine to the 2'-OH of the wobble nucleotide. The sequence is that of tRNA (cytidine(34)-2'-O)-methyltransferase from Polaromonas sp. (strain JS666 / ATCC BAA-500).